A 404-amino-acid chain; its full sequence is UPF0674 endoplasmic reticulum membrane protein YNR021W (404 aa).

Position 2 is an N-acetylserine (S2). The N-linked (GlcNAc...) asparagine glycan is linked to N44. A helical membrane pass occupies residues 49-68; it reads LCALGVLFLVYAFYKFGNSV. A glycan (N-linked (GlcNAc...) asparagine) is linked at N98. Residues 369–404 form a disordered region; it reads AKRRQLKASGQQEKVDQKMKEKRERRLKNKQRTRFQ. Positions 381-392 are enriched in basic and acidic residues; that stretch reads EKVDQKMKEKRE. Over residues 393 to 404 the composition is skewed to basic residues; that stretch reads RRLKNKQRTRFQ.

Belongs to the UPF0674 family.

Its subcellular location is the endoplasmic reticulum membrane. In Saccharomyces cerevisiae (strain ATCC 204508 / S288c) (Baker's yeast), this protein is UPF0674 endoplasmic reticulum membrane protein YNR021W.